A 194-amino-acid polypeptide reads, in one-letter code: Peptidyl-tRNA hydrolase (194 aa).

Position 16 (Y16) interacts with tRNA. The active-site Proton acceptor is the H21. 3 residues coordinate tRNA: F67, N69, and N115.

The protein belongs to the PTH family. Monomer.

The protein resides in the cytoplasm. The catalysed reaction is an N-acyl-L-alpha-aminoacyl-tRNA + H2O = an N-acyl-L-amino acid + a tRNA + H(+). In terms of biological role, hydrolyzes ribosome-free peptidyl-tRNAs (with 1 or more amino acids incorporated), which drop off the ribosome during protein synthesis, or as a result of ribosome stalling. Its function is as follows. Catalyzes the release of premature peptidyl moieties from peptidyl-tRNA molecules trapped in stalled 50S ribosomal subunits, and thus maintains levels of free tRNAs and 50S ribosomes. The polypeptide is Peptidyl-tRNA hydrolase (Salmonella dublin (strain CT_02021853)).